A 467-amino-acid polypeptide reads, in one-letter code: MTCRTRFAPSPTGYLHIGGARTALYCWLEARRRNGQFLLRIEDTDRERSTQAAIDAILHAMDWLGLDYDAPPVYQTQRIERYNQVAARLLAEGKAYYAYDSKDTLNAMREAALRTGEKPRYNGAAREANLPYRDDPNRVIRFKNPHTGTVAFDDLIKGRIQIANSELDDMVILRPDGYPTYNFAVVVDDWDMNITEVIRGDDHINNTPRQINLYHALGAPLPTFAHLPMILDEQGAKLSKRTGAADVMQYRDAGYLPHALINYLVRLGWSHGDQELFNRQALIDLFQINDVNSKAARLDMAKLGWVNQHYLKTDDPATLAPPLVWHLEQRGIDVSAGPAPTDVILALRERVQTLKEMAEKAEIWYCPLQRYDEIAVAKHLKPGADTALLHARTLLAALPTWTVDNVDTALRTTATTLEIGMGKVAQPLRVAITGTQVSPDIAYTVYLTGRNEALKRIDAALIKISTA.

A 'HIGH' region motif is present at residues 9 to 19 (PSPTGYLHIGG). Positions 237–241 (KLSKR) match the 'KMSKS' region motif. Lysine 240 lines the ATP pocket.

This sequence belongs to the class-I aminoacyl-tRNA synthetase family. Glutamate--tRNA ligase type 1 subfamily. As to quaternary structure, monomer.

Its subcellular location is the cytoplasm. The catalysed reaction is tRNA(Glu) + L-glutamate + ATP = L-glutamyl-tRNA(Glu) + AMP + diphosphate. In terms of biological role, catalyzes the attachment of glutamate to tRNA(Glu) in a two-step reaction: glutamate is first activated by ATP to form Glu-AMP and then transferred to the acceptor end of tRNA(Glu). In Xylella fastidiosa (strain 9a5c), this protein is Glutamate--tRNA ligase.